Consider the following 487-residue polypeptide: Probable peptidoglycan glycosyltransferase FtsW (487 aa).

9 consecutive transmembrane segments (helical) span residues 30–50 (VSLILLALSLMAIGLVIVTSA), 71–91 (IYIVLAIGAALTVMQIPMQWW), 93–113 (TSNAWLLLLGLVLLIAVLLVG), 122–142 (WLAIGPITIQAAEPAKLFFFC), 167–187 (VVFFAFAVLLLLQPDLGTVVV), 203–223 (LWQFFGLAFTGGAAVTFLIMF), 282–302 (FIMAILAEELGFAGVLTVLAL), 332–352 (IGIWFSFQTAVNVGASAGILP), and 358–378 (FPLLSYGGSSLIIMAAAVGLL). Disordered stretches follow at residues 398–419 (KAKASTSSSRKNKPKTASSAGK) and 444–487 (IDSI…DGYV). The segment covering 401-416 (ASTSSSRKNKPKTASS) has biased composition (polar residues). Residues 444-453 (IDSIMDDFAQ) are compositionally biased toward acidic residues.

The protein belongs to the SEDS family. FtsW subfamily.

The protein resides in the cell inner membrane. The enzyme catalyses [GlcNAc-(1-&gt;4)-Mur2Ac(oyl-L-Ala-gamma-D-Glu-L-Lys-D-Ala-D-Ala)](n)-di-trans,octa-cis-undecaprenyl diphosphate + beta-D-GlcNAc-(1-&gt;4)-Mur2Ac(oyl-L-Ala-gamma-D-Glu-L-Lys-D-Ala-D-Ala)-di-trans,octa-cis-undecaprenyl diphosphate = [GlcNAc-(1-&gt;4)-Mur2Ac(oyl-L-Ala-gamma-D-Glu-L-Lys-D-Ala-D-Ala)](n+1)-di-trans,octa-cis-undecaprenyl diphosphate + di-trans,octa-cis-undecaprenyl diphosphate + H(+). It participates in cell wall biogenesis; peptidoglycan biosynthesis. Peptidoglycan polymerase that is essential for cell division. The sequence is that of Probable peptidoglycan glycosyltransferase FtsW from Pseudoalteromonas atlantica (strain T6c / ATCC BAA-1087).